We begin with the raw amino-acid sequence, 366 residues long: Aminomethyltransferase (366 aa).

It belongs to the GcvT family. The glycine cleavage system is composed of four proteins: P, T, L and H.

It catalyses the reaction N(6)-[(R)-S(8)-aminomethyldihydrolipoyl]-L-lysyl-[protein] + (6S)-5,6,7,8-tetrahydrofolate = N(6)-[(R)-dihydrolipoyl]-L-lysyl-[protein] + (6R)-5,10-methylene-5,6,7,8-tetrahydrofolate + NH4(+). The glycine cleavage system catalyzes the degradation of glycine. This Neisseria meningitidis serogroup A / serotype 4A (strain DSM 15465 / Z2491) protein is Aminomethyltransferase.